The following is a 386-amino-acid chain: MNIHEYQGKEILRKYGVSVPNGKVAFTPDEAVKASEELESSVYVVKAQIHAGGRGKAGGVKIAKTKDEVKGFAEELLGKTLVTHQTGPEGREIKRLLIEEGCDIQKEYYVGLVLDRATSRIVLMASEEGGTEIEEVAEKTPEKIVKVVIDPAIGLQGYQAREVAFKINIPTKLVGQAVKFMTSLYNAFIEKDCSIAEINPLVVTGDGKVMALDAKLNFDSNALYRQKDILEYRDLDEEDPKEIEASKYDLSYISLDGNIGCMVNGAGLAMSTMDIIKHYGGDPANFLDVGGGATAEKVTEAFKIILSDQNVKGIFVNIFGGIMKCDVIAEGVVEATKQVGLTLPLVVRLEGTNVELGKKILSDSGLNITSAESMADGAEKIVSLVK.

An ATP-grasp domain is found at 9–244; sequence KEILRKYGVS…LDEEDPKEIE (236 aa). Residues Lys-46, 53–55, Glu-99, Cys-102, and Glu-107 contribute to the ATP site; that span reads GRG. Positions 199 and 213 each coordinate Mg(2+). Substrate-binding positions include Asn-264 and 321–323; that span reads GIM.

The protein belongs to the succinate/malate CoA ligase beta subunit family. Heterotetramer of two alpha and two beta subunits. Requires Mg(2+) as cofactor.

It carries out the reaction succinate + ATP + CoA = succinyl-CoA + ADP + phosphate. It catalyses the reaction GTP + succinate + CoA = succinyl-CoA + GDP + phosphate. Its pathway is carbohydrate metabolism; tricarboxylic acid cycle; succinate from succinyl-CoA (ligase route): step 1/1. Functionally, succinyl-CoA synthetase functions in the citric acid cycle (TCA), coupling the hydrolysis of succinyl-CoA to the synthesis of either ATP or GTP and thus represents the only step of substrate-level phosphorylation in the TCA. The beta subunit provides nucleotide specificity of the enzyme and binds the substrate succinate, while the binding sites for coenzyme A and phosphate are found in the alpha subunit. In Bacillus pumilus (strain SAFR-032), this protein is Succinate--CoA ligase [ADP-forming] subunit beta.